The chain runs to 284 residues: Bifunctional protein FolD (284 aa).

NADP(+)-binding positions include 165-167 (GRS), serine 190, and isoleucine 231.

The protein belongs to the tetrahydrofolate dehydrogenase/cyclohydrolase family. In terms of assembly, homodimer.

It catalyses the reaction (6R)-5,10-methylene-5,6,7,8-tetrahydrofolate + NADP(+) = (6R)-5,10-methenyltetrahydrofolate + NADPH. It carries out the reaction (6R)-5,10-methenyltetrahydrofolate + H2O = (6R)-10-formyltetrahydrofolate + H(+). It functions in the pathway one-carbon metabolism; tetrahydrofolate interconversion. Its function is as follows. Catalyzes the oxidation of 5,10-methylenetetrahydrofolate to 5,10-methenyltetrahydrofolate and then the hydrolysis of 5,10-methenyltetrahydrofolate to 10-formyltetrahydrofolate. This Clostridium kluyveri (strain ATCC 8527 / DSM 555 / NBRC 12016 / NCIMB 10680 / K1) protein is Bifunctional protein FolD.